The following is a 256-amino-acid chain: Proteasome subunit alpha-type 8 (256 aa).

The protein belongs to the peptidase T1A family. As to quaternary structure, component of the outer alpha-ring of the 20S proteasome core which is composed of 28 subunits that are arranged in four stacked rings, resulting in a barrel-shaped structure. The catalytic chamber with the active sites is on the inside of the barrel. Interacts with canonical subunits of the spermatoproteasome, including proteasome activators PSME4 (also called PA200) and PSME3 (also called PA28-gamma). Interacts with proteasome-interacting proteins chaperones, ubiquitin ligases and ubiquitin specific proteases. Interacts with meiotic proteins cyclin dependent kinase CDK1 and the ATPase TRIP13 as well as proteins of the synaptonemal complex SIX6OS1 and SYCE3.

It localises to the nucleus. Its function is as follows. Component of the spermatoproteasome, a proteasome specifically found in testis that promotes acetylation-dependent degradation of histones, thereby participating actively to the exchange of histones during spermatogenesis. The proteasome is a protein complex that degrades unneeded or damaged proteins by proteolysis, a chemical reaction that breaks peptide bonds. Required for 20S core proteasome assembly, essential for the degradation of meiotic proteins RAD51 and RPA1 at late prophase I and the progression of meiosis I during spermatogenesis. Localizes to the synaptonemal complex, a 'zipper'-like structure that holds homologous chromosome pairs in synapsis during meiotic prophase I. This is Proteasome subunit alpha-type 8 (PSMA8) from Homo sapiens (Human).